Consider the following 104-residue polypeptide: Urease subunit beta (104 aa).

This sequence belongs to the urease beta subunit family. As to quaternary structure, heterotrimer of UreA (gamma), UreB (beta) and UreC (alpha) subunits. Three heterotrimers associate to form the active enzyme.

Its subcellular location is the cytoplasm. The enzyme catalyses urea + 2 H2O + H(+) = hydrogencarbonate + 2 NH4(+). It functions in the pathway nitrogen metabolism; urea degradation; CO(2) and NH(3) from urea (urease route): step 1/1. This is Urease subunit beta from Rhodopseudomonas palustris (strain BisB18).